The primary structure comprises 54 residues: UPF0391 membrane protein TERTU_3637 (54 aa).

A run of 2 helical transmembrane segments spans residues 4–24 and 29–49; these read WALV…TGLA and SIAW…LVAG.

The protein belongs to the UPF0391 family.

The protein resides in the cell membrane. The protein is UPF0391 membrane protein TERTU_3637 of Teredinibacter turnerae (strain ATCC 39867 / T7901).